Consider the following 304-residue polypeptide: Type II methyltransferase M.HindV (304 aa).

The 299-residue stretch at 1–299 folds into the SAM-dependent MTase C5-type domain; it reads MKCVDLFSGC…SAIINFEKEP (299 aa). Residue Cys75 is part of the active site.

It belongs to the class I-like SAM-binding methyltransferase superfamily. C5-methyltransferase family.

The enzyme catalyses a 2'-deoxycytidine in DNA + S-adenosyl-L-methionine = a 5-methyl-2'-deoxycytidine in DNA + S-adenosyl-L-homocysteine + H(+). In terms of biological role, a methylase, recognizes the double-stranded sequence 5'-GRCGYC-3', methylates C-? on both strands, and protects the DNA from cleavage by the HindV endonuclease. The chain is Type II methyltransferase M.HindV (hindVM) from Haemophilus influenzae (strain ATCC 51907 / DSM 11121 / KW20 / Rd).